We begin with the raw amino-acid sequence, 223 residues long: Deoxyribose-phosphate aldolase 1 (223 aa).

Catalysis depends on aspartate 91, which acts as the Proton donor/acceptor. Catalysis depends on lysine 154, which acts as the Schiff-base intermediate with acetaldehyde. Lysine 183 (proton donor/acceptor) is an active-site residue.

Belongs to the DeoC/FbaB aldolase family. DeoC type 1 subfamily.

Its subcellular location is the cytoplasm. The catalysed reaction is 2-deoxy-D-ribose 5-phosphate = D-glyceraldehyde 3-phosphate + acetaldehyde. It functions in the pathway carbohydrate degradation; 2-deoxy-D-ribose 1-phosphate degradation; D-glyceraldehyde 3-phosphate and acetaldehyde from 2-deoxy-alpha-D-ribose 1-phosphate: step 2/2. Functionally, catalyzes a reversible aldol reaction between acetaldehyde and D-glyceraldehyde 3-phosphate to generate 2-deoxy-D-ribose 5-phosphate. This is Deoxyribose-phosphate aldolase 1 from Bacillus licheniformis (strain ATCC 14580 / DSM 13 / JCM 2505 / CCUG 7422 / NBRC 12200 / NCIMB 9375 / NCTC 10341 / NRRL NRS-1264 / Gibson 46).